The sequence spans 160 residues: Lipoprotein signal peptidase (160 aa).

3 consecutive transmembrane segments (helical) span residues 13-33 (IYIT…HLII), 72-92 (WFLS…ITKL), and 104-124 (SLII…GFVV). Active-site residues include D125 and D143. Residues 134-154 (WHFATFNIADCSIFIGIIILM) traverse the membrane as a helical segment.

It belongs to the peptidase A8 family.

The protein localises to the cell inner membrane. It carries out the reaction Release of signal peptides from bacterial membrane prolipoproteins. Hydrolyzes -Xaa-Yaa-Zaa-|-(S,diacylglyceryl)Cys-, in which Xaa is hydrophobic (preferably Leu), and Yaa (Ala or Ser) and Zaa (Gly or Ala) have small, neutral side chains.. The protein operates within protein modification; lipoprotein biosynthesis (signal peptide cleavage). Functionally, this protein specifically catalyzes the removal of signal peptides from prolipoproteins. In Buchnera aphidicola subsp. Acyrthosiphon pisum (strain Tuc7), this protein is Lipoprotein signal peptidase.